A 351-amino-acid polypeptide reads, in one-letter code: MSENGNKNIAIVEAFSETDKKTGEVVTLVPNTNNTVQPVALMRLGLFVPTLKSTARGRKGQMVSMDASAELKQLSLAKAEGYEDIRISGVRLDMDNDFKTWVGIIHAFAKHKVVGDTVTLPFVEFVRLCGIPTARSSAKLRKRLDSSLTRIATNTISFRSKGSDEYYVTHLVQTAKYSTKNDTVSLQADPKIFELYQFDKKVLLQLRAINELSRKESAQALYTFIESLPPDPAPISLARLRARLNLTSRTITQNATVRKAMEQLREIGYLDYTEVKRGSSVYFIIHYRRPKLRPALPPTKAAPEEPEDILPGDDQEDIIDVVPEEKEGEMVMLSKEELAILEELRKAKARK.

Residues 295–315 (ALPPTKAAPEEPEDILPGDDQ) form a disordered region. Acidic residues predominate over residues 304–315 (EEPEDILPGDDQ).

Belongs to the initiator RepB protein family.

This protein is essential for plasmid replication; it is involved in copy control functions. This is Replication protein RepA (repA) from Salmonella typhi.